The following is a 229-amino-acid chain: Orotate phosphoribosyltransferase (229 aa).

5-phospho-alpha-D-ribose 1-diphosphate-binding positions include arginine 107, lysine 108, lysine 111, histidine 113, and 133 to 141 (EDLTTAGGS). Threonine 137 contacts orotate.

It belongs to the purine/pyrimidine phosphoribosyltransferase family. PyrE subfamily. Homodimer. It depends on Mg(2+) as a cofactor.

It carries out the reaction orotidine 5'-phosphate + diphosphate = orotate + 5-phospho-alpha-D-ribose 1-diphosphate. The protein operates within pyrimidine metabolism; UMP biosynthesis via de novo pathway; UMP from orotate: step 1/2. In terms of biological role, catalyzes the transfer of a ribosyl phosphate group from 5-phosphoribose 1-diphosphate to orotate, leading to the formation of orotidine monophosphate (OMP). The polypeptide is Orotate phosphoribosyltransferase (Rhizobium etli (strain ATCC 51251 / DSM 11541 / JCM 21823 / NBRC 15573 / CFN 42)).